The primary structure comprises 359 residues: S-adenosylmethionine:tRNA ribosyltransferase-isomerase (359 aa).

This sequence belongs to the QueA family. Monomer.

It localises to the cytoplasm. The catalysed reaction is 7-aminomethyl-7-carbaguanosine(34) in tRNA + S-adenosyl-L-methionine = epoxyqueuosine(34) in tRNA + adenine + L-methionine + 2 H(+). It participates in tRNA modification; tRNA-queuosine biosynthesis. Transfers and isomerizes the ribose moiety from AdoMet to the 7-aminomethyl group of 7-deazaguanine (preQ1-tRNA) to give epoxyqueuosine (oQ-tRNA). The polypeptide is S-adenosylmethionine:tRNA ribosyltransferase-isomerase (Alcanivorax borkumensis (strain ATCC 700651 / DSM 11573 / NCIMB 13689 / SK2)).